A 1375-amino-acid polypeptide reads, in one-letter code: Capping protein, Arp2/3 and myosin-I linker protein 3 (1375 aa).

The disordered stretch occupies residues 124 to 151; the sequence is IRRGNADTPEGPRDTSPNSETSTSTTHS. Residues 138–151 are compositionally biased toward low complexity; sequence TSPNSETSTSTTHS. LRR repeat units lie at residues 244-264, 274-295, 303-323, 335-357, 365-386, 392-413, 424-444, 455-475, 482-501, and 509-530; these read SLEE…QKLA, VLHA…SLSQ, GLTK…QALG, SLRY…NALY, ALVH…GALL, HLTY…EAPP, TLSH…RALL, DLHL…ALQE, CIGS…LTLV, and SLKH…EEIL. Disordered stretches follow at residues 864–901 and 969–1375; these read RTLS…GTNI and KLRH…PGTD. Positions 981-997 are enriched in pro residues; sequence PRTTPPGPGRPSVPVPG. The segment covering 1007-1022 has biased composition (basic and acidic residues); it reads RLDEGLEDFFSRRVMD. Over residues 1047–1062 the composition is skewed to basic residues; that stretch reads QKKRRRGLFHFRRPRS. The span at 1078 to 1097 shows a compositional bias: pro residues; the sequence is LPPPPPPPPTQESPPSPDPP. Over residues 1098 to 1108 the composition is skewed to low complexity; sequence SLGNNSSPCWS. Residues 1219 to 1229 show a composition bias toward basic and acidic residues; the sequence is RRAEATWHIAE. A compositionally biased stretch (polar residues) spans 1233 to 1244; the sequence is ANHSCQSPSPAS. The span at 1272-1281 shows a compositional bias: pro residues; the sequence is PIGPRPPKPV. Positions 1348 to 1360 are enriched in basic and acidic residues; that stretch reads QSCDKLEPDRRQP.

The protein belongs to the CARMIL family.

Its subcellular location is the cytoplasm. It localises to the cell membrane. The polypeptide is Capping protein, Arp2/3 and myosin-I linker protein 3 (Carmil3) (Mus musculus (Mouse)).